The sequence spans 252 residues: 4-formylbenzenesulfonate dehydrogenase TsaC1/TsaC2 (252 aa).

Residues 9-36 (IVTG…LVAD) and aspartate 62 contribute to the NAD(+) site. Serine 142 is a substrate binding site. Tyrosine 155 functions as the Proton acceptor in the catalytic mechanism. Lysine 159 contributes to the NAD(+) binding site.

It belongs to the short-chain dehydrogenases/reductases (SDR) family. In terms of assembly, homodimer.

The enzyme catalyses 4-formylbenzenesulfonate + NAD(+) + H2O = 4-sulfobenzoate + NADH + 2 H(+). Involved in the toluene-4-sulfonate degradation pathway. Does not discriminate between the sulfonate and the carboxyl substituents and can also be involved in the p-toluenecarboxylate degradation pathway. In Comamonas testosteroni (Pseudomonas testosteroni), this protein is 4-formylbenzenesulfonate dehydrogenase TsaC1/TsaC2 (tsaC1).